The chain runs to 858 residues: Leucine--tRNA ligase (858 aa).

The short motif at 42–52 (PYPSGRLHMGH) is the 'HIGH' region element. The 'KMSKS' region motif lies at 618–622 (KMSKS). Position 621 (Lys621) interacts with ATP.

The protein belongs to the class-I aminoacyl-tRNA synthetase family.

It is found in the cytoplasm. It catalyses the reaction tRNA(Leu) + L-leucine + ATP = L-leucyl-tRNA(Leu) + AMP + diphosphate. This Aliivibrio fischeri (strain ATCC 700601 / ES114) (Vibrio fischeri) protein is Leucine--tRNA ligase.